The primary structure comprises 304 residues: MTEQNLLQSLAQMVTEQRNANSIDIDRLNAAEIVKIINQEDKSVPFAVEQCLPQIALAVEKIVTAFRQGGRLVYIGAGTSGRLGVLDASECPPTYGVPSDMVVGIIAGGERALRHPIEGAEDNPQQGQADLENIHFTAKDVLVGIAASGRTPYVIGALNYAKSLDAVTVAITGNPGSAMTQIADIAIEAVVGQEVLTGSSRMKSGTAQKLVLNMLTTASMILMGKCYQNLMVDVQASNEKLRARAVRIVMQATECSKDVAQETLQRADNNAKLAIMMVLSGLEKTDAAQVLDRHQGKLRQALAQ.

Positions 62 to 225 (IVTAFRQGGR…TTASMILMGK (164 aa)) constitute an SIS domain. Residue Glu-90 is the Proton donor of the active site. Glu-121 is a catalytic residue.

The protein belongs to the GCKR-like family. MurNAc-6-P etherase subfamily. Homodimer.

It carries out the reaction N-acetyl-D-muramate 6-phosphate + H2O = N-acetyl-D-glucosamine 6-phosphate + (R)-lactate. It functions in the pathway amino-sugar metabolism; 1,6-anhydro-N-acetylmuramate degradation. The protein operates within amino-sugar metabolism; N-acetylmuramate degradation. Its pathway is cell wall biogenesis; peptidoglycan recycling. Functionally, specifically catalyzes the cleavage of the D-lactyl ether substituent of MurNAc 6-phosphate, producing GlcNAc 6-phosphate and D-lactate. Together with AnmK, is also required for the utilization of anhydro-N-acetylmuramic acid (anhMurNAc) either imported from the medium or derived from its own cell wall murein, and thus plays a role in cell wall recycling. The sequence is that of N-acetylmuramic acid 6-phosphate etherase from Actinobacillus succinogenes (strain ATCC 55618 / DSM 22257 / CCUG 43843 / 130Z).